Consider the following 280-residue polypeptide: MAIPVNVKKWIDENREYFLPPVCNKLMQNHQLKVMFVGGPNQRKDYHIEEGEELFYQVQGDMCLKIVENGKHKDVHIKEGEMFLLPGRIPHSPQRYADTVGLVFERRRLDTEKDGLRYYVEGTTEVLFEKWFYCEDLGTQLAPIMKEFFSSEQYKSGKPDPAQPIGKMPFFLNTEQVMEPFSFQNWLNKHRLEINQKKRVSLFGHNQETKAVVYGSGESKDSKAQTDTWIWQLEGTSCVTLGNEVLKLGSGDSLLIPEKSLYSWIREDCSIALSTSQVPA.

The interval 1–160 (MAIPVNVKKW…SEQYKSGKPD (160 aa)) is domain A (catalytic). R43 is a binding site for O2. Residues H47, E53, and H91 each contribute to the Fe cation site. Residue E53 participates in substrate binding. Residues R95 and E105 each coordinate substrate. Positions 161-177 (PAQPIGKMPFFLNTEQV) are linker. Residues 178–280 (MEPFSFQNWL…IALSTSQVPA (103 aa)) are domain B.

It belongs to the 3-HAO family. As to quaternary structure, monomer. It depends on Fe(2+) as a cofactor.

The protein resides in the cytoplasm. The protein localises to the cytosol. The enzyme catalyses 3-hydroxyanthranilate + O2 = (2Z,4Z)-2-amino-3-carboxymuconate 6-semialdehyde. It participates in cofactor biosynthesis; NAD(+) biosynthesis; quinolinate from L-kynurenine: step 3/3. Functionally, catalyzes the oxidative ring opening of 3-hydroxyanthranilate to 2-amino-3-carboxymuconate semialdehyde, which spontaneously cyclizes to quinolinate. This chain is 3-hydroxyanthranilate 3,4-dioxygenase (haao), found in Xenopus tropicalis (Western clawed frog).